The sequence spans 234 residues: Large ribosomal subunit protein uL1 (234 aa).

This sequence belongs to the universal ribosomal protein uL1 family. Part of the 50S ribosomal subunit.

In terms of biological role, binds directly to 23S rRNA. The L1 stalk is quite mobile in the ribosome, and is involved in E site tRNA release. Its function is as follows. Protein L1 is also a translational repressor protein, it controls the translation of the L11 operon by binding to its mRNA. In Vibrio atlanticus (strain LGP32) (Vibrio splendidus (strain Mel32)), this protein is Large ribosomal subunit protein uL1.